The sequence spans 434 residues: Galactofuranosyl glycosyltransferase (434 aa).

The Cytoplasmic portion of the chain corresponds to 1-18 (MAPPRWHHDRRRMAIFVR). A helical; Signal-anchor for type II membrane protein membrane pass occupies residues 19–38 (VGLYTLLFLMGYVVPLIIFY). Residues asparagine 39, asparagine 100, asparagine 162, and asparagine 388 are each glycosylated (N-linked (GlcNAc...) asparagine). Residues 39-434 (NRSRADTFED…KLLDFPVDPS (396 aa)) are Lumenal-facing.

It belongs to the glycosyltransferase 2 family.

Its subcellular location is the endoplasmic reticulum membrane. It functions in the pathway glycolipid biosynthesis; glycosylphosphatidylinositol-anchor biosynthesis. In terms of biological role, glycosyltransferase that may be responsible for the addition of galactofuranosyl residues to the nascent lipophosphoglycan (LPG) chain. It could alternatively be involved in the synthesis of the galactofuranosyl donor. The chain is Galactofuranosyl glycosyltransferase (LPG1) from Leishmania donovani.